We begin with the raw amino-acid sequence, 127 residues long: Putative defensin-like protein 180 (127 aa).

The N-terminal stretch at 1 to 26 is a signal peptide; it reads MERITSLVFFASFLIIFVSGVNQTRA. Disulfide bonds link C29/C70, C36/C55, C39/C64, C43/C66, C81/C127, C92/C112, C97/C121, and C101/C123.

This sequence belongs to the DEFL family.

It is found in the secreted. The chain is Putative defensin-like protein 180 (LCR58) from Arabidopsis thaliana (Mouse-ear cress).